The sequence spans 276 residues: Ferrous iron permease EfeU (276 aa).

Met1 is a topological domain (periplasmic). Residues 2-22 (FVPFLIMLREGLEAALIVSLI) traverse the membrane as a helical segment. At 23 to 34 (ASYLKRTQRGRW) the chain is on the cytoplasmic side. The helical transmembrane segment at 35 to 55 (IGVMWIGVLLAAALCLGLGIF) threads the bilayer. Residues 56 to 69 (INETTGEFPQKEQE) lie on the Periplasmic side of the membrane. A helical membrane pass occupies residues 70–90 (LFEGIVAVIAVVILTWMVFWM). Residues 91 to 118 (RKVSRNVKVQLEQAVDSALQRGNHHGWA) are Cytoplasmic-facing. Residues 119-139 (LVMMVFFAVAREGLESVFFLL) traverse the membrane as a helical segment. Topologically, residues 140-147 (AAFQQDVG) are periplasmic. Residues 148-168 (IWPPLGAMLGLATAVVLGFLL) form a helical membrane-spanning segment. Over 169 to 179 (YWGGIRLNLGA) the chain is Cytoplasmic. Residues 180–200 (FFKWTSLFILFVAAGLAAGAI) form a helical membrane-spanning segment. Residues 201 to 244 (RAFHEAGLWNHFQEIAFDMSAVLSTHSLFGTLMEGIFGYQEAPS) lie on the Periplasmic side of the membrane. A helical transmembrane segment spans residues 245–265 (VSEVAVWFIYLIPALVAFALP). The Cytoplasmic segment spans residues 266-276 (PRAGATASRSA).

The protein belongs to the oxidase-dependent Fe transporter (OFeT) (TC 9.A.10.1) family. As to quaternary structure, part of a ferrous iron transporter composed of EfeU, EfeO and EfeB.

Its subcellular location is the cell inner membrane. Functionally, uptake of Fe(2+) ions across the membrane. This is Ferrous iron permease EfeU (efeU) from Escherichia coli O157:H7.